The following is a 278-amino-acid chain: HTH-type transcriptional activator RhaS (278 aa).

The HTH araC/xylS-type domain maps to 174–272; that stretch reads NLLLAWLEDH…NWSPRDIRQG (99 aa). DNA-binding regions (H-T-H motif) lie at residues 191-212 and 239-262; these read DAVA…KQQT and VTDI…HREF.

In terms of assembly, binds DNA as a dimer.

Its subcellular location is the cytoplasm. Functionally, activates expression of the rhaBAD and rhaT operons. This chain is HTH-type transcriptional activator RhaS, found in Shigella boydii serotype 18 (strain CDC 3083-94 / BS512).